The following is an 88-amino-acid chain: uncharacterized protein (88 aa).

Residues 1 to 31 (MIPRDPRSPAPDLSAINQPAGRAERRSGPAT) form a disordered region.

This is an uncharacterized protein from Escherichia coli.